Reading from the N-terminus, the 66-residue chain is Protein I177L (66 aa).

The protein belongs to the asfivirus I177L family.

Its subcellular location is the virion. The polypeptide is Protein I177L (African swine fever virus (isolate Tick/Malawi/Lil 20-1/1983) (ASFV)).